Consider the following 176-residue polypeptide: Inorganic pyrophosphatase (176 aa).

Lys30, Arg44, and Tyr56 together coordinate substrate. Mg(2+) contacts are provided by Asp66, Asp71, and Asp103. Tyr142 is a substrate binding site.

Belongs to the PPase family. As to quaternary structure, homohexamer. Mg(2+) serves as cofactor.

The protein resides in the cytoplasm. The catalysed reaction is diphosphate + H2O = 2 phosphate + H(+). Functionally, catalyzes the hydrolysis of inorganic pyrophosphate (PPi) forming two phosphate ions. The polypeptide is Inorganic pyrophosphatase (Vibrio vulnificus (strain CMCP6)).